The primary structure comprises 451 residues: MLEIIILAAGKGTRMRSDKPKVLHTLAGKPFLEHVLDRSAELNADKVHVIIGHGADMVREALAGRDVNFVEQTEQLGTGHAVLQVLPHLNPESDTLILYGDVPLTKTDTLAELRAKVSDSSMGLLTVNLADPNGYGRIVRTNGSVTAIVEQKDANPEQLKIDEVNTGVMAVKSAHLAKWLPALSNDNAQGEYYLTDIIAMSSADDIAIETAQPKDEYEVLGVNNRLQQAELERIFQRQVAEELMVAGATLLDPARLDCRGSIEVGRDCVIDVNCVFEGKVVLGNNVHIGPNCVISDSTIGDGTVILANSILEESTLAENCNIGPFARLRPGSQLASKAKIGNFVETKKAVIGEGSKVNHLSYVGDAEIGAGVNIGAGTITCNYDGVNKSKTTIEDGAFIGSNSALVAPVTVGKNATVGAGSIVTKNSEEGDLIIARAKQSNIKGWARPVKK.

The segment at 1–225 (MLEIIILAAG…EYEVLGVNNR (225 aa)) is pyrophosphorylase. Residues 7-10 (LAAG), K21, Q72, 77-78 (GT), 99-101 (YGD), G136, E150, N165, and N223 contribute to the UDP-N-acetyl-alpha-D-glucosamine site. Residue D101 participates in Mg(2+) binding. N223 provides a ligand contact to Mg(2+). Positions 226-246 (LQQAELERIFQRQVAEELMVA) are linker. The segment at 247 to 451 (GATLLDPARL…IKGWARPVKK (205 aa)) is N-acetyltransferase. UDP-N-acetyl-alpha-D-glucosamine is bound by residues R329 and K347. H359 serves as the catalytic Proton acceptor. Residues Y362 and N373 each coordinate UDP-N-acetyl-alpha-D-glucosamine. Acetyl-CoA-binding positions include A376, 382 to 383 (NY), S401, A419, and R436.

It in the N-terminal section; belongs to the N-acetylglucosamine-1-phosphate uridyltransferase family. In the C-terminal section; belongs to the transferase hexapeptide repeat family. Homotrimer. Requires Mg(2+) as cofactor.

The protein localises to the cytoplasm. It catalyses the reaction alpha-D-glucosamine 1-phosphate + acetyl-CoA = N-acetyl-alpha-D-glucosamine 1-phosphate + CoA + H(+). The enzyme catalyses N-acetyl-alpha-D-glucosamine 1-phosphate + UTP + H(+) = UDP-N-acetyl-alpha-D-glucosamine + diphosphate. It participates in nucleotide-sugar biosynthesis; UDP-N-acetyl-alpha-D-glucosamine biosynthesis; N-acetyl-alpha-D-glucosamine 1-phosphate from alpha-D-glucosamine 6-phosphate (route II): step 2/2. The protein operates within nucleotide-sugar biosynthesis; UDP-N-acetyl-alpha-D-glucosamine biosynthesis; UDP-N-acetyl-alpha-D-glucosamine from N-acetyl-alpha-D-glucosamine 1-phosphate: step 1/1. It functions in the pathway bacterial outer membrane biogenesis; LPS lipid A biosynthesis. Functionally, catalyzes the last two sequential reactions in the de novo biosynthetic pathway for UDP-N-acetylglucosamine (UDP-GlcNAc). The C-terminal domain catalyzes the transfer of acetyl group from acetyl coenzyme A to glucosamine-1-phosphate (GlcN-1-P) to produce N-acetylglucosamine-1-phosphate (GlcNAc-1-P), which is converted into UDP-GlcNAc by the transfer of uridine 5-monophosphate (from uridine 5-triphosphate), a reaction catalyzed by the N-terminal domain. This is Bifunctional protein GlmU from Saccharophagus degradans (strain 2-40 / ATCC 43961 / DSM 17024).